A 160-amino-acid chain; its full sequence is Sulfur-rich protein (160 aa).

2 helical membrane passes run 62–82 (ITMV…TFVL) and 91–111 (FLFL…SVFM).

Its subcellular location is the membrane. This Chlamydia caviae (strain ATCC VR-813 / DSM 19441 / 03DC25 / GPIC) (Chlamydophila caviae) protein is Sulfur-rich protein (srp).